Here is a 470-residue protein sequence, read N- to C-terminus: MSNRRKNSLYPTLSAELSALMRTGWADTERHDLAPAEQAPYAALRRAALSARFPGERLVVPSGNLKVRSNDDTYPFRSYSGYVHMTGDQARDGALVLEPRPDGGHDAYCYQLPRDSRDDDEFWTGAHAELWTGRRRSLAESERVLGLPCRDVRTAAADLAAVSEVRTRIVRGIDPALEAAVTTDEERDAELEDALSDLRLVKDAWELGELRKAVDSTVRGFTDVVGELSRAVASSERWLEGTFFRRARLEGNAVGYGTICAAGEHATIMHWTDNDGPVRPGDLLLLDAGVETRSLYTADVTRTLPISGTFTPLQREVYDAVYEAQEAGIATVKPGAAYRDFHEAAQRHLAARLVEWGFIEGPAERAYELGLQRRFTMAGTGHMLGLDVHDCARARTEEYVEGVLEPGMCLTVEPGLYFQADDLTVPEEWRGIGVRIEDDLVVTEDGHENLSAGLPRSADEVEAWMARFAG.

Residues Asp-287, Asp-299, His-382, Glu-413, and Glu-437 each contribute to the Mn(2+) site.

This sequence belongs to the peptidase M24B family. Homodimer. The cofactor is Mn(2+).

The catalysed reaction is Release of any N-terminal amino acid, including proline, that is linked to proline, even from a dipeptide or tripeptide.. The sequence is that of Xaa-Pro aminopeptidase 2 (pepP2) from Streptomyces coelicolor (strain ATCC BAA-471 / A3(2) / M145).